The chain runs to 444 residues: N-succinylarginine dihydrolase (444 aa).

Substrate is bound by residues 19–28 (AGLSFGNVAS), N110, and 137–138 (HR). E174 is a catalytic residue. R214 contributes to the substrate binding site. H250 is an active-site residue. Substrate-binding residues include D252 and N362. The active-site Nucleophile is C368.

This sequence belongs to the succinylarginine dihydrolase family. Homodimer.

It catalyses the reaction N(2)-succinyl-L-arginine + 2 H2O + 2 H(+) = N(2)-succinyl-L-ornithine + 2 NH4(+) + CO2. It functions in the pathway amino-acid degradation; L-arginine degradation via AST pathway; L-glutamate and succinate from L-arginine: step 2/5. Functionally, catalyzes the hydrolysis of N(2)-succinylarginine into N(2)-succinylornithine, ammonia and CO(2). This is N-succinylarginine dihydrolase from Shewanella denitrificans (strain OS217 / ATCC BAA-1090 / DSM 15013).